The primary structure comprises 122 residues: Acidic phospholipase A2 BpirPLA2-I (122 aa).

7 cysteine pairs are disulfide-bonded: Cys-26-Cys-115, Cys-28-Cys-44, Cys-43-Cys-95, Cys-49-Cys-122, Cys-50-Cys-88, Cys-57-Cys-81, and Cys-75-Cys-86. Positions 27, 29, and 31 each coordinate Ca(2+). His-47 is an active-site residue. Asp-48 is a Ca(2+) binding site. Asp-89 is a catalytic residue. The short motif at 105–117 (IKYWFYGAKNCQE) is the Antiplatelet activity element.

The protein belongs to the phospholipase A2 family. Group II subfamily. D49 sub-subfamily. Ca(2+) is required as a cofactor. As to expression, expressed by the venom gland.

It is found in the secreted. The catalysed reaction is a 1,2-diacyl-sn-glycero-3-phosphocholine + H2O = a 1-acyl-sn-glycero-3-phosphocholine + a fatty acid + H(+). Inhibited by EDTA and p-bromophenacyl bromide (BPB). In terms of biological role, snake venom phospholipase A2 (PLA2) that inhibits collagen/ADP-induced platelet aggregation, and induces hypotension in rats (activity abolished in the presence of p-bromophenacyl bromide). PLA2 catalyzes the calcium-dependent hydrolysis of the 2-acyl groups in 3-sn-phosphoglycerides. The protein is Acidic phospholipase A2 BpirPLA2-I of Bothrops pirajai (Piraja's lancehead).